Reading from the N-terminus, the 309-residue chain is Protein FdhE (309 aa).

The protein belongs to the FdhE family.

The protein resides in the cytoplasm. In terms of biological role, necessary for formate dehydrogenase activity. In Salmonella paratyphi A (strain ATCC 9150 / SARB42), this protein is Protein FdhE.